A 78-amino-acid chain; its full sequence is MNPIVEFCISNLAKGGDYVYNQLENDPGIDVLEYGCLQNCGICSSGLYALVNGDIVEGESPDDLLQKIYAHIEETWIF.

The protein belongs to the UPF0349 family.

The chain is UPF0349 protein SSP1836 from Staphylococcus saprophyticus subsp. saprophyticus (strain ATCC 15305 / DSM 20229 / NCIMB 8711 / NCTC 7292 / S-41).